Here is a 99-residue protein sequence, read N- to C-terminus: MALTPTDVSRIALLARLELSEAEQSAMLSQLNGFFDIVERMRAVDTTGVAPLYTPLSAVQEVALRLREDAVTEVDQRQANQLSAPAVEAGLYLVPKVIE.

It belongs to the GatC family. As to quaternary structure, heterotrimer of A, B and C subunits.

It carries out the reaction L-glutamyl-tRNA(Gln) + L-glutamine + ATP + H2O = L-glutaminyl-tRNA(Gln) + L-glutamate + ADP + phosphate + H(+). The catalysed reaction is L-aspartyl-tRNA(Asn) + L-glutamine + ATP + H2O = L-asparaginyl-tRNA(Asn) + L-glutamate + ADP + phosphate + 2 H(+). Functionally, allows the formation of correctly charged Asn-tRNA(Asn) or Gln-tRNA(Gln) through the transamidation of misacylated Asp-tRNA(Asn) or Glu-tRNA(Gln) in organisms which lack either or both of asparaginyl-tRNA or glutaminyl-tRNA synthetases. The reaction takes place in the presence of glutamine and ATP through an activated phospho-Asp-tRNA(Asn) or phospho-Glu-tRNA(Gln). This chain is Aspartyl/glutamyl-tRNA(Asn/Gln) amidotransferase subunit C, found in Methylibium petroleiphilum (strain ATCC BAA-1232 / LMG 22953 / PM1).